The following is a 179-amino-acid chain: Large ribosomal subunit protein uL5 (179 aa).

The protein belongs to the universal ribosomal protein uL5 family. In terms of assembly, part of the 50S ribosomal subunit; part of the 5S rRNA/L5/L18/L25 subcomplex. Contacts the 5S rRNA and the P site tRNA. Forms a bridge to the 30S subunit in the 70S ribosome.

Its function is as follows. This is one of the proteins that bind and probably mediate the attachment of the 5S RNA into the large ribosomal subunit, where it forms part of the central protuberance. In the 70S ribosome it contacts protein S13 of the 30S subunit (bridge B1b), connecting the 2 subunits; this bridge is implicated in subunit movement. Contacts the P site tRNA; the 5S rRNA and some of its associated proteins might help stabilize positioning of ribosome-bound tRNAs. This Exiguobacterium sibiricum (strain DSM 17290 / CCUG 55495 / CIP 109462 / JCM 13490 / 255-15) protein is Large ribosomal subunit protein uL5.